Here is a 483-residue protein sequence, read N- to C-terminus: Krueppel-like factor 4 (483 aa).

The interval 22–42 is disordered; the sequence is TFASGPAGREKTLRPAGAPTN. Residue Lys-32 forms a Glycyl lysine isopeptide (Lys-Gly) (interchain with G-Cter in ubiquitin) linkage. A 9aaTAD motif is present at residues 99–107; it reads DLLDLDFIL. Ser-251 is modified (phosphoserine). Positions 294–395 are disordered; it reads AGPQLSNGHR…KRGRRSWPRK (102 aa). A compositionally biased stretch (pro residues) spans 338–356; sequence LPLPPGFHPHPGPNYPPFL. 5-glutamyl polyglutamate is present on Glu-381. Basic residues predominate over residues 386–395; that stretch reads KRGRRSWPRK. Residues 386 to 483 form an interaction with ZNF296 region; sequence KRGRRSWPRK…HLALHMKRHF (98 aa). C2H2-type zinc fingers lie at residues 400-424, 430-454, and 460-482; these read HTCD…LRTH, YHCD…YRKH, and FQCQ…MKRH. The interaction with target DNA stretch occupies residues 443-474; that stretch reads RSDELTRHYRKHTGHRPFQCQKCDRAFSRSDH.

This sequence belongs to the krueppel C2H2-type zinc-finger protein family. In terms of assembly, interacts with MUC1 (via the C-terminal domain). Interacts with POU5F1/OCT4 and SOX2. Interacts with MEIS2 isoform MeisD and PBX1 isoform PBX1a. Interacts with ZNF296. Interacts with GLIS1. Interacts with BTRC; this interaction leads to KLF4 ubiquitination and subsequent degradation. Interacts with IPO7; the interaction facilitates nuclear translocation of KLF4 in dental papilla cells. Post-translationally, ubiquitinated. 'Lys-48'-linked ubiquitinated and targeted for proteasomal degradation by the SCF(BTRC) E3 ubiquitin-protein ligase complex, thereby negatively regulating cell pluripotency maintenance and embryogenesis. Polyglutamylated by TTLL1 and TTLL4 at Glu-381, which inhibits KLF4 binding with E3 ligase component BTRC, thereby impeding ubiquitination. Deglutamylated by CCP1 and CCP6; deglutamylation promotes KLF4 ubiquitination. KLF4 glutamylation state plays a critical role in the regulation of its function in cell reprogramming, pluripotency maintenance and embryogenesis. In terms of tissue distribution, highest expression in the colon. Lower levels in testis, lung and small intestine.

The protein localises to the nucleus. It is found in the cytoplasm. Its function is as follows. Transcription factor; can act both as activator and as repressor. Binds the 5'-CACCC-3' core sequence. Binds to the promoter region of its own gene and can activate its own transcription. Regulates the expression of key transcription factors during embryonic development. Plays an important role in maintaining embryonic stem cells, and in preventing their differentiation. Required for establishing the barrier function of the skin and for postnatal maturation and maintenance of the ocular surface. Involved in the differentiation of epithelial cells and may also function in skeletal and kidney development. Contributes to the down-regulation of p53/TP53 transcription. The polypeptide is Krueppel-like factor 4 (Klf4) (Mus musculus (Mouse)).